The following is a 201-amino-acid chain: Recombination protein RecR (201 aa).

The C4-type zinc-finger motif lies at 60–75; that stretch reads CKRCGSYAETEICEIC. One can recognise a Toprim domain in the interval 83-178; it reads HTFCVVEQPE…NVTRIAYGIT (96 aa).

Belongs to the RecR family.

Its function is as follows. May play a role in DNA repair. It seems to be involved in an RecBC-independent recombinational process of DNA repair. It may act with RecF and RecO. This chain is Recombination protein RecR, found in Leptospira interrogans serogroup Icterohaemorrhagiae serovar copenhageni (strain Fiocruz L1-130).